We begin with the raw amino-acid sequence, 150 residues long: Endoribonuclease YbeY (150 aa).

3 residues coordinate Zn(2+): His-108, His-112, and His-118.

It belongs to the endoribonuclease YbeY family. Zn(2+) serves as cofactor.

The protein localises to the cytoplasm. Single strand-specific metallo-endoribonuclease involved in late-stage 70S ribosome quality control and in maturation of the 3' terminus of the 16S rRNA. This chain is Endoribonuclease YbeY, found in Methylococcus capsulatus (strain ATCC 33009 / NCIMB 11132 / Bath).